The primary structure comprises 302 residues: Sulfate adenylyltransferase subunit 2 (302 aa).

The segment at Arg-280 to Phe-302 is disordered.

It belongs to the PAPS reductase family. CysD subfamily. As to quaternary structure, heterodimer composed of CysD, the smaller subunit, and CysN.

It catalyses the reaction sulfate + ATP + H(+) = adenosine 5'-phosphosulfate + diphosphate. Its pathway is sulfur metabolism; hydrogen sulfide biosynthesis; sulfite from sulfate: step 1/3. In terms of biological role, with CysN forms the ATP sulfurylase (ATPS) that catalyzes the adenylation of sulfate producing adenosine 5'-phosphosulfate (APS) and diphosphate, the first enzymatic step in sulfur assimilation pathway. APS synthesis involves the formation of a high-energy phosphoric-sulfuric acid anhydride bond driven by GTP hydrolysis by CysN coupled to ATP hydrolysis by CysD. In Shewanella baltica (strain OS185), this protein is Sulfate adenylyltransferase subunit 2.